The sequence spans 311 residues: Deacetoxycephalosporin C synthase (311 aa).

One can recognise a Fe2OG dioxygenase domain in the interval 154 to 267 (DCEPLLRFRY…RTSSVFFLRP (114 aa)).

It belongs to the iron/ascorbate-dependent oxidoreductase family. Fe cation is required as a cofactor. It depends on L-ascorbate as a cofactor.

It catalyses the reaction penicillin N + 2-oxoglutarate + O2 = deacetoxycephalosporin C + succinate + CO2 + H2O. The protein operates within antibiotic biosynthesis; cephalosporin C biosynthesis. Catalyzes the step from penicillin N to deacetoxy-cephalosporin C. The protein is Deacetoxycephalosporin C synthase (cefE) of Streptomyces clavuligerus.